Here is a 153-residue protein sequence, read N- to C-terminus: Xanthine-guanine phosphoribosyltransferase (153 aa).

Residues 37-38 (RG), Arg-69, and 88-96 (DDLVDTGGT) each bind 5-phospho-alpha-D-ribose 1-diphosphate. GMP is bound at residue Arg-69. Asp-89 provides a ligand contact to Mg(2+). 2 residues coordinate guanine: Asp-92 and Ile-135. Residues Asp-92 and Ile-135 each contribute to the xanthine site. GMP is bound by residues 92–96 (DTGGT) and 134–135 (WI).

It belongs to the purine/pyrimidine phosphoribosyltransferase family. XGPT subfamily. Homotetramer. The cofactor is Mg(2+).

Its subcellular location is the cell inner membrane. The catalysed reaction is GMP + diphosphate = guanine + 5-phospho-alpha-D-ribose 1-diphosphate. It carries out the reaction XMP + diphosphate = xanthine + 5-phospho-alpha-D-ribose 1-diphosphate. It catalyses the reaction IMP + diphosphate = hypoxanthine + 5-phospho-alpha-D-ribose 1-diphosphate. It participates in purine metabolism; GMP biosynthesis via salvage pathway; GMP from guanine: step 1/1. Its pathway is purine metabolism; XMP biosynthesis via salvage pathway; XMP from xanthine: step 1/1. Its function is as follows. Purine salvage pathway enzyme that catalyzes the transfer of the ribosyl-5-phosphate group from 5-phospho-alpha-D-ribose 1-diphosphate (PRPP) to the N9 position of the 6-oxopurines guanine and xanthine to form the corresponding ribonucleotides GMP (guanosine 5'-monophosphate) and XMP (xanthosine 5'-monophosphate), with the release of PPi. To a lesser extent, also acts on hypoxanthine. The sequence is that of Xanthine-guanine phosphoribosyltransferase from Proteus mirabilis (strain HI4320).